The chain runs to 181 residues: Inner membrane-spanning protein YciB (181 aa).

Transmembrane regions (helical) follow at residues 19 to 39 (FFDIYAATGALIVATLIQLIA), 50 to 70 (MHLITFALVASFGTATLIFHD), 80 to 100 (IVYALFAIALIAGQFLGKPIL), 118 to 138 (LTWYWVLFFVACGLINIYVAF), and 148 to 168 (FKVFGLTAATLVNTLLTVVYL).

It belongs to the YciB family.

The protein localises to the cell inner membrane. In terms of biological role, plays a role in cell envelope biogenesis, maintenance of cell envelope integrity and membrane homeostasis. This is Inner membrane-spanning protein YciB from Shewanella amazonensis (strain ATCC BAA-1098 / SB2B).